An 80-amino-acid polypeptide reads, in one-letter code: Exodeoxyribonuclease 7 small subunit (80 aa).

The protein belongs to the XseB family. In terms of assembly, heterooligomer composed of large and small subunits.

It localises to the cytoplasm. The catalysed reaction is Exonucleolytic cleavage in either 5'- to 3'- or 3'- to 5'-direction to yield nucleoside 5'-phosphates.. Bidirectionally degrades single-stranded DNA into large acid-insoluble oligonucleotides, which are then degraded further into small acid-soluble oligonucleotides. This chain is Exodeoxyribonuclease 7 small subunit, found in Rickettsia massiliae (strain Mtu5).